A 104-amino-acid chain; its full sequence is ATP-dependent Clp protease adapter protein ClpS (104 aa).

Belongs to the ClpS family. As to quaternary structure, binds to the N-terminal domain of the chaperone ClpA.

In terms of biological role, involved in the modulation of the specificity of the ClpAP-mediated ATP-dependent protein degradation. The polypeptide is ATP-dependent Clp protease adapter protein ClpS (Desulforapulum autotrophicum (strain ATCC 43914 / DSM 3382 / VKM B-1955 / HRM2) (Desulfobacterium autotrophicum)).